Here is a 441-residue protein sequence, read N- to C-terminus: tRNA modification GTPase MnmE (441 aa).

The (6S)-5-formyl-5,6,7,8-tetrahydrofolate site is built by R24, E81, and K121. The TrmE-type G domain maps to 218-366 (GMVVAIAGPP…LLRELTRFAA (149 aa)). GTP-binding positions include 228–233 (NVGKST), 247–253 (SPHAGTT), and 272–275 (DTAG). Residues S232 and T253 each coordinate Mg(2+). K441 lines the (6S)-5-formyl-5,6,7,8-tetrahydrofolate pocket.

The protein belongs to the TRAFAC class TrmE-Era-EngA-EngB-Septin-like GTPase superfamily. TrmE GTPase family. As to quaternary structure, homodimer. Heterotetramer of two MnmE and two MnmG subunits. It depends on K(+) as a cofactor.

It localises to the cytoplasm. Exhibits a very high intrinsic GTPase hydrolysis rate. Involved in the addition of a carboxymethylaminomethyl (cmnm) group at the wobble position (U34) of certain tRNAs, forming tRNA-cmnm(5)s(2)U34. The protein is tRNA modification GTPase MnmE of Rhodopseudomonas palustris (strain ATCC BAA-98 / CGA009).